A 343-amino-acid chain; its full sequence is Thromboxane A2 receptor (343 aa).

At 1 to 29 (MWPNASSLGPCFRPMNITLEERRLIASPW) the chain is on the extracellular side. N-linked (GlcNAc...) asparagine glycosylation is found at asparagine 4 and asparagine 16. The chain crosses the membrane as a helical span at residues 30–52 (FAASFCLVGLASNLLALSVLMGA). At 53 to 66 (RQGSSQSRSSFLTF) the chain is on the cytoplasmic side. Residues 67-87 (LCGLVLTDFMGLLVTGAIVVT) traverse the membrane as a helical segment. Residues 88 to 106 (QHFVLFEWQAVDPGCSLCH) lie on the Extracellular side of the membrane. Cysteines 105 and 183 form a disulfide. The chain crosses the membrane as a helical span at residues 107–128 (FMGVIMVFFGLCPLLLGAAMAS). Residues 129–149 (ERFLGITRPFSRPATASQRRA) are Cytoplasmic-facing. Residues 150-172 (WTTVGLVWASALALGLLPLLGVG) traverse the membrane as a helical segment. Residues 173–193 (HYTVQYPGSWCFLTLGTDPGD) lie on the Extracellular side of the membrane. The helical transmembrane segment at 194 to 219 (VAFGLLFALLGSISVGMSFLLNTISV) threads the bilayer. Residues 220–246 (ATLCHVYHGQATAQQRPRDCEVEMMVQ) are Cytoplasmic-facing. A helical transmembrane segment spans residues 247-270 (LMGIMVVASICWMPLLVFIAQTVL). The Extracellular segment spans residues 271 to 289 (QSPPAMSPTGQLSRLTERQ). The chain crosses the membrane as a helical span at residues 290 to 311 (LLIYLRVATWNQILDPWVYILF). The Cytoplasmic portion of the chain corresponds to 312–343 (RRAVIQRFYPRLSTRSRSLSLQPQLTRRSTIH). Phosphoserine occurs at positions 329 and 331.

Belongs to the G-protein coupled receptor 1 family. As to quaternary structure, interacts with RPGRIP1L. Interacts with RACK1; the interaction regulates TBXA2R cell surface expression.

The protein localises to the cell membrane. In terms of biological role, receptor for thromboxane A2 (TXA2), a potent stimulator of platelet aggregation. The activity of this receptor is mediated by a G-protein that activates a phosphatidylinositol-calcium second messenger system. In the kidney, the binding of TXA2 to glomerular TP receptors causes intense vasoconstriction. Activates phospholipase C and adenylyl cyclase. The polypeptide is Thromboxane A2 receptor (TBXA2R) (Bos taurus (Bovine)).